A 378-amino-acid chain; its full sequence is AT-hook motif nuclear-localized protein 5 (378 aa).

3 disordered regions span residues 30–70 (QVAS…AEHR), 88–160 (VQPT…GRKQ), and 302–378 (NNNK…LTRG). The segment covering 104–113 (VKKKRGRPRK) has biased composition (basic residues). Positions 105–113 (KKKRGRPRK) match the Bipartite nuclear localization signal motif. DNA-binding regions (a.T hook) lie at residues 105 to 117 (KKKRGRPRKYVPD) and 147 to 159 (KRARGRPPGTGRK). The PPC domain occupies 171 to 314 (TSAGLAFAPH…KTIKQEIKPK (144 aa)). Composition is skewed to polar residues over residues 316 to 327 (EPTNSEMETTPG) and 335 to 345 (STGQHTPQNFP).

As to quaternary structure, interacts with AHL29.

It localises to the nucleus. In terms of biological role, transcription factor that specifically binds AT-rich DNA sequences related to the nuclear matrix attachment regions (MARs). In Arabidopsis thaliana (Mouse-ear cress), this protein is AT-hook motif nuclear-localized protein 5.